A 390-amino-acid polypeptide reads, in one-letter code: L-seryl-tRNA(Sec) selenium transferase (390 aa).

K225 is subject to N6-(pyridoxal phosphate)lysine.

This sequence belongs to the SelA family. Pyridoxal 5'-phosphate serves as cofactor.

The protein localises to the cytoplasm. The catalysed reaction is L-seryl-tRNA(Sec) + selenophosphate + H(+) = L-selenocysteinyl-tRNA(Sec) + phosphate. Its pathway is aminoacyl-tRNA biosynthesis; selenocysteinyl-tRNA(Sec) biosynthesis; selenocysteinyl-tRNA(Sec) from L-seryl-tRNA(Sec) (bacterial route): step 1/1. Functionally, converts seryl-tRNA(Sec) to selenocysteinyl-tRNA(Sec) required for selenoprotein biosynthesis. This chain is L-seryl-tRNA(Sec) selenium transferase, found in Helicobacter pylori (strain P12).